The following is a 541-amino-acid chain: uncharacterized protein (541 aa).

The next 6 helical transmembrane spans lie at 57–77 (LVVT…TIAI), 90–110 (LTFG…SYAL), 144–164 (VGHL…YGLI), 167–187 (AFIP…ATAT), 221–241 (MVVW…MAMF), and 257–277 (VLII…ILAW). Residues 278–329 (LTATPVRVVRAALRRVERGELRTNLVVFDGTELGELQRGFNAMVAGLRERER) enclose the HAMP domain. The Guanylate cyclase domain occupies 361–485 (AVVFIDIVGS…EPVNEAARLC (125 aa)).

Belongs to the adenylyl cyclase class-3 family.

The protein localises to the cell membrane. This is an uncharacterized protein from Mycobacterium tuberculosis (strain CDC 1551 / Oshkosh).